Consider the following 147-residue polypeptide: Fluoride-specific ion channel FluC 1 (147 aa).

4 helical membrane passes run 29–49 (YVYI…ISFL), 61–81 (IANL…IAFF), 90–110 (AITT…LELI), and 118–138 (FITL…LCYV). Residues glycine 97 and threonine 100 each contribute to the Na(+) site.

Belongs to the fluoride channel Fluc/FEX (TC 1.A.43) family.

The protein resides in the cell membrane. It carries out the reaction fluoride(in) = fluoride(out). Na(+) is not transported, but it plays an essential structural role and its presence is essential for fluoride channel function. Its function is as follows. Fluoride-specific ion channel. Important for reducing fluoride concentration in the cell, thus reducing its toxicity. The protein is Fluoride-specific ion channel FluC 1 of Staphylococcus aureus (strain Mu50 / ATCC 700699).